Here is a 280-residue protein sequence, read N- to C-terminus: DegV domain-containing protein spyM18_1709 (280 aa).

The DegV domain maps to 3–280 (WKIVTDSGCD…DGGLLMGYEI (278 aa)). S63 and S91 together coordinate hexadecanoate.

In terms of biological role, may bind long-chain fatty acids, such as palmitate, and may play a role in lipid transport or fatty acid metabolism. The chain is DegV domain-containing protein spyM18_1709 from Streptococcus pyogenes serotype M18 (strain MGAS8232).